The chain runs to 152 residues: CASP-like protein 5C3 (152 aa).

The Cytoplasmic portion of the chain corresponds to 1–17 (MVEVPGSVGTTASLSLR). A helical transmembrane segment spans residues 18-38 (LGQMVLAFGSLLFMTIGVRFY). Residues 39 to 42 (QFTA) are Extracellular-facing. A helical transmembrane segment spans residues 43 to 63 (FCYLVTIMSLAIPWNLTLAMV). Residues 64–78 (DIYCVILQQPFQKPR) are Cytoplasmic-facing. A helical transmembrane segment spans residues 79–99 (ILLAISIGDWVVSVLALASAS). The Extracellular segment spans residues 100–128 (SAASVVDILRSNESSCPPTICNRYQFAAT). N111 carries N-linked (GlcNAc...) asparagine glycosylation. A helical transmembrane segment spans residues 129-149 (LAFLTWFLSLSSSLFNLWLLP). Residues 150 to 152 (SLI) lie on the Cytoplasmic side of the membrane.

This sequence belongs to the Casparian strip membrane proteins (CASP) family. As to quaternary structure, homodimer and heterodimers. As to expression, expressed in the floral organ abscission zone and flower buds.

Its subcellular location is the cell membrane. The polypeptide is CASP-like protein 5C3 (Arabidopsis thaliana (Mouse-ear cress)).